The chain runs to 470 residues: TNF receptor-associated factor 4 (470 aa).

The RING-type zinc finger occupies 18–58; the sequence is CPLCGKPMREPVQVSTCGHRFCDTCLQEFLSEGVFKCPEDQ. 3 TRAF-type zinc fingers span residues 101–154, 155–208, and 209–267; these read GHLN…EAYE, SHEG…DTIQ, and SHQY…LAMG. Lys263 participates in a covalent cross-link: Glycyl lysine isopeptide (Lys-Gly) (interchain with G-Cter in ubiquitin). Residues 277–310 are a coiled coil; the sequence is HLAMMCALVSRQRQELQELRRELEELSIGSDGVL. An MATH domain is found at 307–462; the sequence is DGVLIWKIGS…DDAVFIRASV (156 aa). At Ser426 the chain carries Phosphoserine.

The protein belongs to the TNF receptor-associated factor family. B subfamily. Homotrimer. Interacts with LTBR/TNFRSF3, NGFR/TNFRSF16, RPS6KB1 and TGFB1I1. Interacts with SMURF1. Interacts (via TRAF domain) with MAP3K4 (via kinase domain). Interacts with NCF1, TICAM1, IRAK1 and TRAF6, and is probably part of a complex containing TRAF4, NCF1, TICAM1, IRAK1 and TRAF6. Interacts (via MATH domain) with GP6 and GP1BB. Interacts with EGFR (via C-terminal region); this interaction promotes the formation of EGFR asymmetric dimers. Interacts with PKM; this interaction promotes PKM kinase activity. Polyubiquitinated, leading to its proteasomal degradation. Ubiquitinated at Lys-263 by the SCF(FBXL2) complex, leading to its degradation by the proteasome. Predominantly expressed in brain. Preferentially expressed by postmitotic undifferentiated neurons in developing central (CNS) and peripheral (PNS) nervous system, and in nervous tissues of sensory organs. In the embryo, protein expression was shown in brain, thymus, salivary glands and intestine. In the adult, protein expression is restricted to the brain (hippocampus and olfactory bulb).

It is found in the cytoplasm. The protein localises to the nucleus. Its subcellular location is the perinuclear region. The protein resides in the cell junction. It localises to the tight junction. It is found in the cell membrane. The protein localises to the cytoskeleton. The catalysed reaction is S-ubiquitinyl-[E2 ubiquitin-conjugating enzyme]-L-cysteine + [acceptor protein]-L-lysine = [E2 ubiquitin-conjugating enzyme]-L-cysteine + N(6)-ubiquitinyl-[acceptor protein]-L-lysine.. It functions in the pathway protein degradation; proteasomal ubiquitin-dependent pathway. Functionally, adapter protein with E3 ligase activity that is involved in many diverse biological processes including cell proliferation, migration, differentiation, DNA repair, platelet activation or apoptosis. Promotes EGFR-mediated signaling by facilitating the dimerization of EGFR and downstream AKT activation thereby promoting cell proliferation. Ubiquitinates SMURF2 through 'Lys-48'-linked ubiquitin chain leading to SMURF2 degradation through the proteasome and subsequently osteogenic differentiation. Promotes 'Lys-63'-mediated ubiquitination of CHK1 which in turn activates cell cycle arrest and activation of DNA repair. In addition, promotes an atypical 'Lys-29'-linked ubiquitination at the C-terminal end of IRS1 which is crucial for insulin-like growth factor (IGF) signal transduction. Regulates activation of NF-kappa-B in response to signaling through Toll-like receptors. Required for normal skeleton development, and for normal development of the respiratory tract. Required for activation of RPS6KB1 in response to TNF signaling. Modulates TRAF6 functions. Inhibits adipogenic differentiation by activating pyruvate kinase PKM activity and subsequently the beta-catenin signaling pathway. In Mus musculus (Mouse), this protein is TNF receptor-associated factor 4 (Traf4).